The primary structure comprises 548 residues: Probable bifunctional tRNA threonylcarbamoyladenosine biosynthesis protein (548 aa).

Residues Met-1–Trp-338 are kae1. Positions 122 and 126 each coordinate Fe cation. Residues Asn-143–Ala-147, Asp-175, Gly-188, Glu-192, and Asn-271 each bind L-threonylcarbamoyladenylate. Asp-299 contributes to the Fe cation binding site. The Protein kinase domain maps to Arg-349–Gln-548. ATP-binding positions include Val-355 to Val-362 and Lys-371. Basic and acidic residues predominate over residues Glu-390–Arg-404. A disordered region spans residues Glu-390–Arg-413. Asp-460 acts as the Proton acceptor; for kinase activity in catalysis.

It in the N-terminal section; belongs to the KAE1 / TsaD family. The protein in the C-terminal section; belongs to the protein kinase superfamily. Tyr protein kinase family. BUD32 subfamily. Component of the KEOPS complex that consists of Kae1, Bud32, Cgi121 and Pcc1; the whole complex dimerizes. Fe(2+) is required as a cofactor.

It is found in the cytoplasm. It carries out the reaction L-seryl-[protein] + ATP = O-phospho-L-seryl-[protein] + ADP + H(+). The enzyme catalyses L-threonyl-[protein] + ATP = O-phospho-L-threonyl-[protein] + ADP + H(+). It catalyses the reaction L-threonylcarbamoyladenylate + adenosine(37) in tRNA = N(6)-L-threonylcarbamoyladenosine(37) in tRNA + AMP + H(+). Its function is as follows. Required for the formation of a threonylcarbamoyl group on adenosine at position 37 (t(6)A37) in tRNAs that read codons beginning with adenine. Is a component of the KEOPS complex that is probably involved in the transfer of the threonylcarbamoyl moiety of threonylcarbamoyl-AMP (TC-AMP) to the N6 group of A37. The Kae1 domain likely plays a direct catalytic role in this reaction. The Bud32 domain probably displays kinase activity that regulates Kae1 function. This chain is Probable bifunctional tRNA threonylcarbamoyladenosine biosynthesis protein, found in Haloarcula marismortui (strain ATCC 43049 / DSM 3752 / JCM 8966 / VKM B-1809) (Halobacterium marismortui).